The following is a 305-amino-acid chain: Ribosomal protein L11 methyltransferase (305 aa).

Positions 155, 176, 198, and 241 each coordinate S-adenosyl-L-methionine.

This sequence belongs to the methyltransferase superfamily. PrmA family.

The protein resides in the cytoplasm. It catalyses the reaction L-lysyl-[protein] + 3 S-adenosyl-L-methionine = N(6),N(6),N(6)-trimethyl-L-lysyl-[protein] + 3 S-adenosyl-L-homocysteine + 3 H(+). Its function is as follows. Methylates ribosomal protein L11. This chain is Ribosomal protein L11 methyltransferase, found in Carboxydothermus hydrogenoformans (strain ATCC BAA-161 / DSM 6008 / Z-2901).